The primary structure comprises 687 residues: DNA-directed RNA polymerase subunit beta' (687 aa).

The Zn(2+) site is built by Cys-69, Cys-71, Cys-87, and Cys-90. Asp-491, Asp-493, and Asp-495 together coordinate Mg(2+).

This sequence belongs to the RNA polymerase beta' chain family. RpoC1 subfamily. As to quaternary structure, in plastids the minimal PEP RNA polymerase catalytic core is composed of four subunits: alpha, beta, beta', and beta''. When a (nuclear-encoded) sigma factor is associated with the core the holoenzyme is formed, which can initiate transcription. Requires Mg(2+) as cofactor. It depends on Zn(2+) as a cofactor.

The protein resides in the plastid. It localises to the chloroplast. The enzyme catalyses RNA(n) + a ribonucleoside 5'-triphosphate = RNA(n+1) + diphosphate. Functionally, DNA-dependent RNA polymerase catalyzes the transcription of DNA into RNA using the four ribonucleoside triphosphates as substrates. The polypeptide is DNA-directed RNA polymerase subunit beta' (Glycine max (Soybean)).